The primary structure comprises 542 residues: Phosphoenolpyruvate carboxykinase (ATP) (542 aa).

3 residues coordinate substrate: R67, Y208, and K214. ATP-binding positions include K214, H233, and G249–T257. Mn(2+)-binding residues include K214 and H233. D270 serves as a coordination point for Mn(2+). ATP contacts are provided by residues E298, R334, R450–I451, and T456. Position 334 (R334) interacts with substrate.

Belongs to the phosphoenolpyruvate carboxykinase (ATP) family. As to quaternary structure, monomer. Mn(2+) serves as cofactor.

The protein localises to the cytoplasm. It catalyses the reaction oxaloacetate + ATP = phosphoenolpyruvate + ADP + CO2. Its pathway is carbohydrate biosynthesis; gluconeogenesis. Functionally, involved in the gluconeogenesis. Catalyzes the conversion of oxaloacetate (OAA) to phosphoenolpyruvate (PEP) through direct phosphoryl transfer between the nucleoside triphosphate and OAA. The sequence is that of Phosphoenolpyruvate carboxykinase (ATP) from Vibrio cholerae serotype O1 (strain ATCC 39541 / Classical Ogawa 395 / O395).